The primary structure comprises 645 residues: 1,4-alpha-glucan branching enzyme GlgB (645 aa).

D309 serves as the catalytic Nucleophile. Residue E352 is the Proton donor of the active site. The segment at 619 to 645 is disordered; the sequence is VKTRKGSKKQDGSKTKVRSNVTSRGKR. Over residues 636 to 645 the composition is skewed to polar residues; the sequence is RSNVTSRGKR.

The protein belongs to the glycosyl hydrolase 13 family. GlgB subfamily. In terms of assembly, monomer.

It carries out the reaction Transfers a segment of a (1-&gt;4)-alpha-D-glucan chain to a primary hydroxy group in a similar glucan chain.. Its pathway is glycan biosynthesis; glycogen biosynthesis. Functionally, catalyzes the formation of the alpha-1,6-glucosidic linkages in glycogen by scission of a 1,4-alpha-linked oligosaccharide from growing alpha-1,4-glucan chains and the subsequent attachment of the oligosaccharide to the alpha-1,6 position. In Bacillus cereus (strain ATCC 10987 / NRS 248), this protein is 1,4-alpha-glucan branching enzyme GlgB.